A 41-amino-acid chain; its full sequence is Large ribosomal subunit protein bL36 (41 aa).

The protein belongs to the bacterial ribosomal protein bL36 family.

The polypeptide is Large ribosomal subunit protein bL36 (Hydrogenovibrio crunogenus (strain DSM 25203 / XCL-2) (Thiomicrospira crunogena)).